Here is a 167-residue protein sequence, read N- to C-terminus: Stress-related protein (167 aa).

It belongs to the REF/SRPP family.

Plays a role in plant defense. This Phaseolus vulgaris (Kidney bean) protein is Stress-related protein (SRP).